We begin with the raw amino-acid sequence, 92 residues long: Small ribosomal subunit protein uS19c (92 aa).

Belongs to the universal ribosomal protein uS19 family.

It localises to the plastid. Protein S19 forms a complex with S13 that binds strongly to the 16S ribosomal RNA. The polypeptide is Small ribosomal subunit protein uS19c (Cuscuta reflexa (Southern Asian dodder)).